The following is a 101-amino-acid chain: Protein PIP-1 (101 aa).

A signal peptide spans 1–23; it reads MGKCLLLPLLLVVLSSLLGFPQA. Residues 24-101 enclose the UPAR/Ly6 domain; the sequence is LECFQCQRVS…CHDSPFCNKF (78 aa). 5 disulfides stabilise this stretch: C26–C53, C29–C38, C45–C71, C75–C91, and C92–C98. N-linked (GlcNAc...) asparagine glycosylation occurs at N84.

The protein localises to the secreted. The sequence is that of Protein PIP-1 from Sus scrofa (Pig).